Reading from the N-terminus, the 208-residue chain is Uracil phosphoribosyltransferase (208 aa).

Residues Arg78, Arg103, and 130–138 (DPMLATANS) each bind 5-phospho-alpha-D-ribose 1-diphosphate. Uracil contacts are provided by residues Ile193 and 198–200 (GDA). Residue Asp199 coordinates 5-phospho-alpha-D-ribose 1-diphosphate.

The protein belongs to the UPRTase family. Mg(2+) is required as a cofactor.

The catalysed reaction is UMP + diphosphate = 5-phospho-alpha-D-ribose 1-diphosphate + uracil. The protein operates within pyrimidine metabolism; UMP biosynthesis via salvage pathway; UMP from uracil: step 1/1. With respect to regulation, allosterically activated by GTP. Catalyzes the conversion of uracil and 5-phospho-alpha-D-ribose 1-diphosphate (PRPP) to UMP and diphosphate. The polypeptide is Uracil phosphoribosyltransferase (Brucella ovis (strain ATCC 25840 / 63/290 / NCTC 10512)).